The primary structure comprises 61 residues: Photosystem II reaction center X protein (61 aa).

The chain crosses the membrane as a helical span at residues 26-46 (IGSFIAAALLIVIPATAFLIF).

Belongs to the PsbX family. Type 2 subfamily. As to quaternary structure, PSII consists of a core antenna complex that captures photons, and an electron transfer chain that converts photonic excitation into a charge separation. PSII forms dimeric complexes.

It is found in the cellular thylakoid membrane. Functionally, involved in the binding and/or turnover of quinones at the Q(B) site of Photosystem II. In Prochlorococcus marinus (strain MIT 9301), this protein is Photosystem II reaction center X protein.